A 356-amino-acid polypeptide reads, in one-letter code: Iron-sulfur cluster assembly factor IBA57, mitochondrial (356 aa).

A mitochondrion-targeting transit peptide spans 1 to 39; the sequence is MATAALLRGATPGRGGPVWRWRLRAAPRCRLAHSSCSPG. Residue K309 is modified to N6-acetyllysine; alternate. At K309 the chain carries N6-succinyllysine; alternate.

It belongs to the GcvT family. CAF17/IBA57 subfamily. Monomer. Heterotetramer; forms a dimer of dimers with ISCA2. Interacts with [2Fe-2S]-ISCA2 forming the heterodimer [2Fe- 2S]-ISCA2-IBA57 complex; [2Fe-2S] cluster binding is absolutely required to promote the complex formation. Expressed in skin fibroblasts and skeletal muscle (at protein level).

The protein resides in the mitochondrion. Its function is as follows. Mitochondrial protein involved in the maturation of mitochondrial [4Fe-4S]-proteins in the late stage of the iron-sulfur cluster assembly pathway. Operates in cooperation with ISCA2 in the maturation of [4Fe-4S] proteins. Functionally, involved in the maturation of mitochondrial 2Fe-2S proteins in the late stage of the iron-sulfur cluster assembly pathway. This chain is Iron-sulfur cluster assembly factor IBA57, mitochondrial (IBA57), found in Homo sapiens (Human).